The chain runs to 540 residues: Calnexin homolog (540 aa).

Positions 1–29 (MELSRRKMCCYIQFCCFVLIGCFISQICA) are cleaved as a signal peptide. Topologically, residues 30–469 (SSDAIFYESF…EKAETQPNIT (440 aa)) are lumenal. 2 residues coordinate Ca(2+): S38 and D69. C112 and C147 are disulfide-bonded. An alpha-D-glucoside is bound by residues Y116, K118, Y138, and D145. A disordered region spans residues 221–301 (LIPTKTIPDP…DWDDEEDGEW (81 aa)). The segment at 227–360 (IPDPDDKKPE…REIPNPDYFE (134 aa)) is p domain (Extended arm). Positions 228–253 (PDPDDKKPEDWDERAKIPDPEATKPD) are enriched in basic and acidic residues. Repeat copies occupy residues 229–240 (DPDDKKPEDWDE), 246–257 (DPEATKPDDWDE), 265–276 (DEEAEKPEGWLD), 284–295 (DPEAVKPEDWDD), and 299–309 (GEWEAPQIENP). 2 4 X approximate repeats regions span residues 229–295 (DPDD…DWDD) and 299–356 (GEWE…IPNP). Composition is skewed to acidic residues over residues 254-285 (DWDEDAPMEILDEEAEKPEGWLDDEPEEIDDP) and 292-301 (DWDDEEDGEW). A disulfide bridge links C311 with C317. 3 tandem repeats follow at residues 318 to 328 (GEWRRPLKRNP), 332 to 342 (GKWHAPLIDNP), and 346 to 356 (GIWKPREIPNP). Position 375 (E375) interacts with an alpha-D-glucoside. Ca(2+) is bound at residue D386. The N-linked (GlcNAc...) asparagine glycan is linked to N467. A helical transmembrane segment spans residues 470 to 490 (IGVIVSIIVVIFSILLKLLFG). Residues 491–540 (GKKAAPKVNVVPKKKEEPEASNTAEVREGEEEKTEGEVAAAPRRRPRRDT) are Cytoplasmic-facing. The segment at 499–540 (NVVPKKKEEPEASNTAEVREGEEEKTEGEVAAAPRRRPRRDT) is disordered.

Belongs to the calreticulin family.

It is found in the endoplasmic reticulum membrane. Calcium-binding protein that interacts with newly synthesized monoglucosylated glycoproteins in the endoplasmic reticulum. It may act in assisting protein assembly and/or in the retention within the ER of unassembled protein subunits. It seems to play a major role in the quality control apparatus of the ER by the retention of incorrectly folded proteins. This is Calnexin homolog from Helianthus tuberosus (Jerusalem artichoke).